We begin with the raw amino-acid sequence, 421 residues long: MSKLTIVRGFNDVLPLDSYKWQFLESKVKLILDRYNYSETRLPIVERSELFHRSVGESSDIVSKETYDFQDRNGDSLTLRPEGTAGCVRMVIENNLATRGQTQKLWYCGPMFRYERPQKGRYRQFYQLGVEAYGFDGIAIDLEVIAIAWSLFKELGISEYVTLELNSLGSSLNRQEYTQALLQYLKPYHAELDEDSIKRLDKNPLRILDSKIEKTQKILANAPKLIDFIDHDLRLRFKQTCQYLDALGVRYKLNENLVRGLDYYTGLVFEWTTDKLGSQSAICAGGRYDGLVENLGGQKIAAIGFAIGMERLLLLLEDLGKLPNQDNACDVFFILDSAQLHQSLAIVENIRQELPQLKIDMDLKFGSFKSQFKKADKSGAKVAIIIGQDELDNGFAGIKFLQQNEEQQQVAFNELINFLER.

The protein belongs to the class-II aminoacyl-tRNA synthetase family. As to quaternary structure, homodimer.

It localises to the cytoplasm. It catalyses the reaction tRNA(His) + L-histidine + ATP = L-histidyl-tRNA(His) + AMP + diphosphate + H(+). This chain is Histidine--tRNA ligase, found in Francisella tularensis subsp. holarctica (strain OSU18).